The following is a 90-amino-acid chain: Small ribosomal subunit protein bS16 (90 aa).

It belongs to the bacterial ribosomal protein bS16 family.

The protein is Small ribosomal subunit protein bS16 of Streptococcus equi subsp. zooepidemicus (strain H70).